A 199-amino-acid polypeptide reads, in one-letter code: Recombination protein RecR (199 aa).

The C4-type zinc finger occupies 57-72 (CSVCGNITEQDPCAIC). One can recognise a Toprim domain in the interval 80-176 (STIMVVEEAK…KVTRLAAGLA (97 aa)).

This sequence belongs to the RecR family.

Functionally, may play a role in DNA repair. It seems to be involved in an RecBC-independent recombinational process of DNA repair. It may act with RecF and RecO. The sequence is that of Recombination protein RecR from Lactobacillus delbrueckii subsp. bulgaricus (strain ATCC BAA-365 / Lb-18).